The sequence spans 287 residues: NAD kinase (287 aa).

Asp56 (proton acceptor) is an active-site residue. Residues 56 to 57 (DG), Arg61, 128 to 129 (ND), and Asp156 contribute to the NAD(+) site.

It belongs to the NAD kinase family. It depends on a divalent metal cation as a cofactor.

The protein resides in the cytoplasm. The enzyme catalyses NAD(+) + ATP = ADP + NADP(+) + H(+). In terms of biological role, involved in the regulation of the intracellular balance of NAD and NADP, and is a key enzyme in the biosynthesis of NADP. Catalyzes specifically the phosphorylation on 2'-hydroxyl of the adenosine moiety of NAD to yield NADP. The polypeptide is NAD kinase (Thermomicrobium roseum (strain ATCC 27502 / DSM 5159 / P-2)).